Consider the following 179-residue polypeptide: DELTA-actitoxin-Afr1c (179 aa).

Residues 1 to 29 are N-terminal alpha-helix that contributes to the pore; sequence SAEVAGAIIDGASLTFDVLQTVLKALGDV. The segment at 11 to 30 is N-terminal region; that stretch reads GASLTFDVLQTVLKALGDVS. Position 31 (arginine 31) interacts with an N-(acyl)-sphingosylphosphocholine. Tyrosine 51 and arginine 53 together coordinate N-acetyl-D-glucosamine 6-sulfate. An N-(acyl)-sphingosylphosphocholine contacts are provided by arginine 53, serine 54, arginine 79, glycine 85, tyrosine 113, serine 114, tryptophan 116, tyrosine 133, tyrosine 137, tyrosine 138, arginine 144, and glycine 168. Positions 105–120 are trp-rich region, which is important for the binding to lipid membrane; sequence SIPFDYNLYSNWWNVK. N-acetyl-D-glucosamine 6-sulfate is bound at residue tyrosine 138. The Cell attachment site, crucial for protein stability signature appears at 144 to 146; that stretch reads RGD.

This sequence belongs to the actinoporin family. Sea anemone subfamily. As to quaternary structure, octamer or nonamer in membranes. Monomer in the soluble state.

Its subcellular location is the secreted. It localises to the nematocyst. It is found in the target cell membrane. In terms of biological role, pore-forming toxin (PFT) that consists of a crown-shaped octamer or nonamer that forms cation-selective hydrophilic pores of about 1.5 nm (inside) and 13 nm (outside) and causes cytolysis. It causes cardiac stimulation. Also causes hemolysis (HC(50)=0.3 nM). Interestingly, the Phe-16 is crucial for hemolysis. Pore formation is a multi-step process that involves specific recognition of membrane sphingomyelin (but neither cholesterol nor phosphatidylcholine) using aromatic rich region and adjacent phosphocholine (POC) binding site, firm binding to the membrane (mainly driven by hydrophobic interactions) accompanied by the transfer of the N-terminal region to the lipid-water interface and finally pore formation after oligomerization of monomers. It is probable that a dimeric form is an assembly intermediate before the complete oligomerization. The formation of stable pores occurs only in vesicles composed of DOPC/SM (there is no oligomerization when the PFT is treated with vesicles of DOPC or SM alone). The transmembrane pore displays 8 lateral perforations, one at each subunit-subunit interface, partially occupied by the acyl-chain region of a bridging lipid. Each pore contains 24 lipid molecules, firmly bound to each subunit, that is, 3 lipids (L1, L2, L3, L4 and/or L5) are associated to each subunit. Lipid L1 bridges 2 subunits, whereas lipids L2 and L3 bind to sites at single subunit. The polypeptide is DELTA-actitoxin-Afr1c (Actinia fragacea (Strawberry anemone)).